Reading from the N-terminus, the 142-residue chain is MTNGKYAARKLKKDRQQRRWSDSEYARRERGLGKKSDPLEGAPQGRGIVLEKVGIEAKQPNSAIRKCVRVQLIKNGKQVTAFCPGDGAISFIDEHDEVTIAGIGGAKGRAMGDLSGVNYKVEKVNGVSLIELVRGNAEKPVR.

The tract at residues 1-44 (MTNGKYAARKLKKDRQQRRWSDSEYARRERGLGKKSDPLEGAPQ) is disordered. Basic residues predominate over residues 7 to 16 (AARKLKKDRQ). Over residues 17–38 (QRRWSDSEYARRERGLGKKSDP) the composition is skewed to basic and acidic residues.

This sequence belongs to the universal ribosomal protein uS12 family. Part of the 30S ribosomal subunit.

Functionally, with S4 and S5 plays an important role in translational accuracy. Located at the interface of the 30S and 50S subunits. The chain is Small ribosomal subunit protein uS12 from Halobacterium salinarum (strain ATCC 29341 / DSM 671 / R1).